A 1938-amino-acid chain; its full sequence is Myosin-1 (1938 aa).

Residues 33–82 enclose the Myosin N-terminal SH3-like domain; the sequence is DAKTSVFVADPKESFVKATVQSREGGKVTAKTEAGATVTVKEDQCFPMNP. Threonine 64 and threonine 69 each carry phosphothreonine. In terms of domain architecture, Myosin motor spans 86 to 781; it reads DKIEDMAMMT…LLGLLEEMRD (696 aa). At lysine 130 the chain carries N6,N6,N6-trimethyllysine. ATP is bound at residue 179-186; the sequence is GESGAGKT. Tyrosine 389 carries the phosphotyrosine modification. Phosphothreonine is present on threonine 419. Tyrosine 424 carries the post-translational modification Phosphotyrosine. Phosphoserine is present on serine 625. Residues 658–680 are actin-binding; sequence LNKLMTNLRSTHPHFVRCIIPNE. At histidine 756 the chain carries Pros-methylhistidine. Residues 760-774 form an actin-binding region; that stretch reads KFGHTKVFFKAGLLG. The 30-residue stretch at 784-813 folds into the IQ domain; that stretch reads LAQIITRTQARCRGFLARVEYQRMVERRES. Residues 842–1938 adopt a coiled-coil conformation; that stretch reads LLKSAETEKE…EVHTKIISEE (1097 aa). Serine 1091 and serine 1095 each carry phosphoserine. Disordered regions lie at residues 1124 to 1146 and 1152 to 1171; these read EIEAERASRAKAEKQRSDLSREL and RLEEAGGATSAQIEMNKKRE. The segment covering 1127–1146 has biased composition (basic and acidic residues); that stretch reads AERASRAKAEKQRSDLSREL. A phosphoserine mark is found at serine 1161 and serine 1236. Threonine 1240 carries the post-translational modification Phosphothreonine. Serine 1242 bears the Phosphoserine mark. The residue at position 1254 (threonine 1254) is a Phosphothreonine. Phosphoserine is present on serine 1260. Threonine 1285 carries the phosphothreonine modification. Phosphoserine is present on residues serine 1291, serine 1302, and serine 1305. Tyrosine 1463 carries the post-translational modification Phosphotyrosine. Threonine 1466 carries the post-translational modification Phosphothreonine. Position 1473 is a phosphoserine (serine 1473). Tyrosine 1491 bears the Phosphotyrosine mark. The residue at position 1494 (serine 1494) is a Phosphoserine. A Phosphothreonine modification is found at threonine 1500. Serine 1513 is modified (phosphoserine). At threonine 1516 the chain carries Phosphothreonine. A phosphoserine mark is found at serine 1541, serine 1553, serine 1573, serine 1713, and serine 1725. A phosphothreonine mark is found at threonine 1729 and threonine 1735. The residue at position 1738 (serine 1738) is a Phosphoserine.

This sequence belongs to the TRAFAC class myosin-kinesin ATPase superfamily. Myosin family. Muscle myosin is a hexameric protein that consists of 2 heavy chain subunits (MHC), 2 alkali light chain subunits (MLC) and 2 regulatory light chain subunits (MLC-2). Interacts with SLC26A5.

Its subcellular location is the cytoplasm. It localises to the myofibril. In terms of biological role, required for normal hearing. It plays a role in cochlear amplification of auditory stimuli, likely through the positive regulation of prestin (SLC26A5) activity and outer hair cell (OHC) electromotility. This Equus caballus (Horse) protein is Myosin-1 (MYH1).